Consider the following 69-residue polypeptide: Large ribosomal subunit protein bL28 (69 aa).

The protein belongs to the bacterial ribosomal protein bL28 family.

This is Large ribosomal subunit protein bL28 from Nitratidesulfovibrio vulgaris (strain DSM 19637 / Miyazaki F) (Desulfovibrio vulgaris).